The sequence spans 258 residues: 5'-nucleotidase SurE (258 aa).

A divalent metal cation-binding residues include D10, D11, S41, and N96.

The protein belongs to the SurE nucleotidase family. A divalent metal cation serves as cofactor.

The protein resides in the cytoplasm. It catalyses the reaction a ribonucleoside 5'-phosphate + H2O = a ribonucleoside + phosphate. Nucleotidase that shows phosphatase activity on nucleoside 5'-monophosphates. In Sorangium cellulosum (strain So ce56) (Polyangium cellulosum (strain So ce56)), this protein is 5'-nucleotidase SurE.